A 144-amino-acid chain; its full sequence is Cytochrome c oxidase subunit 4 isoform 1, mitochondrial (144 aa).

Residues Ser-1–Asn-73 are Mitochondrial matrix-facing. N6-acetyllysine; alternate is present on Lys-4. An N6-succinyllysine; alternate modification is found at Lys-4. An N6-acetyllysine modification is found at Lys-28. Phosphoserine is present on residues Ser-31 and Ser-33. Lys-35 bears the N6-acetyllysine; alternate mark. At Lys-35 the chain carries N6-succinyllysine; alternate. Lys-42 is subject to N6-acetyllysine. Residues Glu-74–Tyr-99 form a helical membrane-spanning segment. Residues Val-100 to Lys-144 are Mitochondrial intermembrane-facing.

Belongs to the cytochrome c oxidase IV family. Component of the cytochrome c oxidase (complex IV, CIV), a multisubunit enzyme composed of 14 subunits. The complex is composed of a catalytic core of 3 subunits MT-CO1, MT-CO2 and MT-CO3, encoded in the mitochondrial DNA, and 11 supernumerary subunits COX4I, COX5A, COX5B, COX6A, COX6B, COX6C, COX7A, COX7B, COX7C, COX8 and NDUFA4, which are encoded in the nuclear genome. The complex exists as a monomer or a dimer and forms supercomplexes (SCs) in the inner mitochondrial membrane with NADH-ubiquinone oxidoreductase (complex I, CI) and ubiquinol-cytochrome c oxidoreductase (cytochrome b-c1 complex, complex III, CIII), resulting in different assemblies (supercomplex SCI(1)III(2)IV(1) and megacomplex MCI(2)III(2)IV(2)). Interacts with PHB2; the interaction decreases in absence of SPHK2. Interacts with AFG1L. Interacts with ABCB7; this interaction allows the regulation of cellular iron homeostasis and cellular reactive oxygen species (ROS) levels in cardiomyocytes. Interacts with FLVCR2; this interaction occurs in the absence of heme and is disrupted upon heme binding. Interacts with IRGC.

Its subcellular location is the mitochondrion inner membrane. It functions in the pathway energy metabolism; oxidative phosphorylation. Functionally, component of the cytochrome c oxidase, the last enzyme in the mitochondrial electron transport chain which drives oxidative phosphorylation. The respiratory chain contains 3 multisubunit complexes succinate dehydrogenase (complex II, CII), ubiquinol-cytochrome c oxidoreductase (cytochrome b-c1 complex, complex III, CIII) and cytochrome c oxidase (complex IV, CIV), that cooperate to transfer electrons derived from NADH and succinate to molecular oxygen, creating an electrochemical gradient over the inner membrane that drives transmembrane transport and the ATP synthase. Cytochrome c oxidase is the component of the respiratory chain that catalyzes the reduction of oxygen to water. Electrons originating from reduced cytochrome c in the intermembrane space (IMS) are transferred via the dinuclear copper A center (CU(A)) of subunit 2 and heme A of subunit 1 to the active site in subunit 1, a binuclear center (BNC) formed by heme A3 and copper B (CU(B)). The BNC reduces molecular oxygen to 2 water molecules using 4 electrons from cytochrome c in the IMS and 4 protons from the mitochondrial matrix. The protein is Cytochrome c oxidase subunit 4 isoform 1, mitochondrial (COX4I1) of Theropithecus gelada (Gelada baboon).